The primary structure comprises 992 residues: Tubulin glycylase 3A (992 aa).

Disordered regions lie at residues 1 to 54 (MQTR…NRVV) and 68 to 113 (QSDS…LGAP). Over residues 7 to 26 (SEPHRSRDQVTDGDRNRDQP) the composition is skewed to basic and acidic residues. Positions 39-49 (VTPPAAPPPTP) are enriched in pro residues. The TTL domain maps to 295–645 (FKLTACVAFL…RRTDPKAELG (351 aa)). ATP is bound by residues 457–460 (QKYI), lysine 470, and aspartate 472. 2 disordered regions span residues 746–766 (SLCS…TATP) and 791–828 (KRNT…PVES). Residues 794 to 807 (TGGSLSGEQVQSTA) show a composition bias toward polar residues.

The protein localises to the cytoplasm. The protein resides in the cytoskeleton. In terms of biological role, polylycylase which modifies alpha- and beta-tubulin, generating side chains of glycine on the gamma-carboxyl groups of specific glutamate residues within the C-terminal tail of alpha- and beta-tubulin. Involved both in the side-chain initiation and elongation steps of the polyglycylation reaction by adding a single glycine chain to generate monoglycine side chains and by elongating monoglycine side chains to polyglycine side chains. This chain is Tubulin glycylase 3A (TTLL3A), found in Drosophila melanogaster (Fruit fly).